The primary structure comprises 145 residues: Large ribosomal subunit protein bL35c (145 aa).

A chloroplast-targeting transit peptide spans 1–56; that stretch reads MASLSMASVNVSFCHPLRSSSPKVSLRSSVHFATSLSSSHSISGLRAVLPLKISTV.

Belongs to the bacterial ribosomal protein bL35 family. As to quaternary structure, part of the 50S ribosomal subunit.

It is found in the plastid. The protein localises to the chloroplast. This chain is Large ribosomal subunit protein bL35c, found in Arabidopsis thaliana (Mouse-ear cress).